Consider the following 622-residue polypeptide: Glucose 1,6-bisphosphate synthase (622 aa).

The alpha-D-glucose 1,6-bisphosphate site is built by Arg-73 and Ser-175. Residue Ser-175 is the Phosphoserine intermediate of the active site. Mg(2+) is bound by residues Ser-175, Asp-332, and Asp-334. Position 175 is a phosphoserine (Ser-175). Residues Asp-336, Arg-337, Glu-434, Ser-436, and Lys-448 each coordinate alpha-D-glucose 1,6-bisphosphate.

It belongs to the phosphohexose mutase family.

The protein resides in the cytoplasm. The protein localises to the cytosol. It carries out the reaction (2R)-3-phospho-glyceroyl phosphate + alpha-D-glucose 1-phosphate = alpha-D-glucose 1,6-bisphosphate + (2R)-3-phosphoglycerate + H(+). The enzyme catalyses alpha-D-glucose 6-phosphate + (2R)-3-phospho-glyceroyl phosphate = alpha-D-glucose 1,6-bisphosphate + (2R)-3-phosphoglycerate + H(+). The catalysed reaction is (2R)-3-phospho-glyceroyl phosphate + alpha-D-ribose 1-phosphate = alpha-D-ribose 1,5-bisphosphate + (2R)-3-phosphoglycerate + H(+). It catalyses the reaction 2-deoxy-alpha-D-ribose 1-phosphate + (2R)-3-phospho-glyceroyl phosphate = 2-deoxy-alpha-D-ribose 1,5-bisphosphate + (2R)-3-phosphoglycerate + H(+). It carries out the reaction (2R)-3-phospho-glyceroyl phosphate + alpha-D-mannose 1-phosphate = alpha-D-mannose 1,6-bisphosphate + (2R)-3-phosphoglycerate + H(+). In terms of biological role, glucose 1,6-bisphosphate synthase using 1,3-bisphosphoglycerate as a phosphate donor and a series of 1-phosphate sugars, including glucose 1-phosphate, mannose 1-phosphate, ribose 1-phosphate and deoxyribose 1-phosphate, as acceptors. In vitro, also exhibits very low phosphopentomutase and phosphoglucomutase activity which are most probably not physiologically relevant. This chain is Glucose 1,6-bisphosphate synthase, found in Homo sapiens (Human).